Here is a 189-residue protein sequence, read N- to C-terminus: UPF0301 protein HRM2_24640 (189 aa).

It belongs to the UPF0301 (AlgH) family.

The polypeptide is UPF0301 protein HRM2_24640 (Desulforapulum autotrophicum (strain ATCC 43914 / DSM 3382 / VKM B-1955 / HRM2) (Desulfobacterium autotrophicum)).